Here is a 376-residue protein sequence, read N- to C-terminus: Succinyl-diaminopimelate desuccinylase (376 aa).

A Zn(2+)-binding site is contributed by His-66. Asp-68 is an active-site residue. Asp-99 contacts Zn(2+). Glu-133 functions as the Proton acceptor in the catalytic mechanism. Residues Glu-134, Glu-162, and His-349 each coordinate Zn(2+).

Belongs to the peptidase M20A family. DapE subfamily. Homodimer. The cofactor is Zn(2+). Co(2+) serves as cofactor.

The enzyme catalyses N-succinyl-(2S,6S)-2,6-diaminopimelate + H2O = (2S,6S)-2,6-diaminopimelate + succinate. The protein operates within amino-acid biosynthesis; L-lysine biosynthesis via DAP pathway; LL-2,6-diaminopimelate from (S)-tetrahydrodipicolinate (succinylase route): step 3/3. In terms of biological role, catalyzes the hydrolysis of N-succinyl-L,L-diaminopimelic acid (SDAP), forming succinate and LL-2,6-diaminopimelate (DAP), an intermediate involved in the bacterial biosynthesis of lysine and meso-diaminopimelic acid, an essential component of bacterial cell walls. This Ruthia magnifica subsp. Calyptogena magnifica protein is Succinyl-diaminopimelate desuccinylase.